Reading from the N-terminus, the 707-residue chain is Ribosomal RNA large subunit methyltransferase K/L (707 aa).

Residues 43–154 (QIYRCCLWSR…KDKAILGVDM (112 aa)) enclose the THUMP domain.

This sequence belongs to the methyltransferase superfamily. RlmKL family.

It is found in the cytoplasm. It carries out the reaction guanosine(2445) in 23S rRNA + S-adenosyl-L-methionine = N(2)-methylguanosine(2445) in 23S rRNA + S-adenosyl-L-homocysteine + H(+). The catalysed reaction is guanosine(2069) in 23S rRNA + S-adenosyl-L-methionine = N(2)-methylguanosine(2069) in 23S rRNA + S-adenosyl-L-homocysteine + H(+). Its function is as follows. Specifically methylates the guanine in position 2445 (m2G2445) and the guanine in position 2069 (m7G2069) of 23S rRNA. The protein is Ribosomal RNA large subunit methyltransferase K/L of Vibrio campbellii (strain ATCC BAA-1116).